A 231-amino-acid polypeptide reads, in one-letter code: Triggering receptor expressed on myeloid cells 1 (231 aa).

The signal sequence occupies residues 1–20; the sequence is MRKTRLWGLLWMFFVSELLA. At 21–202 the chain is on the extracellular side; that stretch reads ATKLTEEKYE…TDIIRVPVFN (182 aa). The Ig-like V-type domain occupies 26 to 131; the sequence is EEKYELKEGQ…LFDRIRLVVT (106 aa). An intrachain disulfide couples Cys41 to Cys110. Polar residues-rich tracts occupy residues 134–157 and 164–182; these read SSGT…TTTK and TSPT…DVST. Residues 134 to 182 are disordered; that stretch reads SSGTPGSSENSTPNVYKTPPTTTKALRPLYTSPTTVTQAPPKSTADVST. 2 N-linked (GlcNAc...) asparagine glycosylation sites follow: Asn188 and Asn191. A helical membrane pass occupies residues 203-223; the sequence is IAILVAGGFLSKSLVFSVLFA. Residues 224 to 231 are Cytoplasmic-facing; it reads VTLRSFVP.

In terms of assembly, monomer. Homomultimer; when activated. Interacts with TYROBP/DAP12. Interacts with TLR4.

It localises to the cell membrane. Its function is as follows. Cell surface receptor that plays important roles in innate and adaptive immunity by amplifying inflammatory responses. Upon activation by various ligands such as PGLYRP1, HMGB1 or HSP70, multimerizes and forms a complex with transmembrane adapter TYROBP/DAP12. In turn, initiates a SYK-mediated cascade of tyrosine phosphorylation, activating multiple downstream mediators such as BTK, MAPK1, MAPK3 or phospholipase C-gamma. This cascade promotes the neutrophil- and macrophage-mediated release of pro-inflammatory cytokines and/or chemokines, as well as their migration and thereby amplifies inflammatory responses that are triggered by bacterial and fungal infections. By also promoting the amplification of inflammatory signals that are initially triggered by Toll-like receptor (TLR) and NOD-like receptor engagement, plays a major role in the pathophysiology of acute and chronic inflammatory diseases of different etiologies including septic shock and atherosclerosis. This Pongo abelii (Sumatran orangutan) protein is Triggering receptor expressed on myeloid cells 1 (TREM1).